The primary structure comprises 498 residues: Lysine--tRNA ligase (498 aa).

Mg(2+) contacts are provided by E407 and E414.

This sequence belongs to the class-II aminoacyl-tRNA synthetase family. Homodimer. Mg(2+) is required as a cofactor.

The protein resides in the cytoplasm. It catalyses the reaction tRNA(Lys) + L-lysine + ATP = L-lysyl-tRNA(Lys) + AMP + diphosphate. The sequence is that of Lysine--tRNA ligase from Rhizobium johnstonii (strain DSM 114642 / LMG 32736 / 3841) (Rhizobium leguminosarum bv. viciae).